Here is an 848-residue protein sequence, read N- to C-terminus: DNA mismatch repair protein MutS (848 aa).

605-612 (GPNMAGKS) lines the ATP pocket.

Belongs to the DNA mismatch repair MutS family.

Its function is as follows. This protein is involved in the repair of mismatches in DNA. It is possible that it carries out the mismatch recognition step. This protein has a weak ATPase activity. The protein is DNA mismatch repair protein MutS of Leptospira interrogans serogroup Icterohaemorrhagiae serovar copenhageni (strain Fiocruz L1-130).